A 306-amino-acid polypeptide reads, in one-letter code: IN2-2 protein (306 aa).

Residue Tyr64 is the Proton donor of the active site. His131 provides a ligand contact to substrate. 210–220 (SPLGRGFFSSG) provides a ligand contact to NADP(+). Positions 272–306 (LGSPPRKRRLPHTWHNKNRQLQPERGGTVCEAYTG) are disordered. A compositionally biased stretch (basic residues) spans 276-289 (PRKRRLPHTWHNKN).

This sequence belongs to the aldo/keto reductase family. Aldo/keto reductase 2 subfamily. Leaves and roots.

This is IN2-2 protein (IN2-2) from Zea mays (Maize).